The primary structure comprises 215 residues: Orotate phosphoribosyltransferase (215 aa).

Residue Lys-26 participates in 5-phospho-alpha-D-ribose 1-diphosphate binding. Residue 34 to 35 coordinates orotate; it reads FF. 5-phospho-alpha-D-ribose 1-diphosphate contacts are provided by residues 72–73, Arg-99, Lys-100, Lys-103, His-105, and 124–132; these read YK and DDVITAGTA. Residues Thr-128 and Arg-156 each coordinate orotate.

Belongs to the purine/pyrimidine phosphoribosyltransferase family. PyrE subfamily. In terms of assembly, homodimer. The cofactor is Mg(2+).

It catalyses the reaction orotidine 5'-phosphate + diphosphate = orotate + 5-phospho-alpha-D-ribose 1-diphosphate. It participates in pyrimidine metabolism; UMP biosynthesis via de novo pathway; UMP from orotate: step 1/2. In terms of biological role, catalyzes the transfer of a ribosyl phosphate group from 5-phosphoribose 1-diphosphate to orotate, leading to the formation of orotidine monophosphate (OMP). The chain is Orotate phosphoribosyltransferase from Cellvibrio japonicus (strain Ueda107) (Pseudomonas fluorescens subsp. cellulosa).